We begin with the raw amino-acid sequence, 543 residues long: Splicing factor U2af large subunit B (543 aa).

Gly residues predominate over residues 1-10 (MADDNGGGGD). Positions 1–171 (MADDNGGGGD…IPTPSQLPGS (171 aa)) are disordered. Basic and acidic residues-rich tracts occupy residues 17 to 78 (VRPE…DRDR) and 88 to 114 (EHRDRPDDHDRHRSRDSERRRDRERDG). A compositionally biased stretch (basic residues) spans 115-126 (HRRHRSRSRSRS). RRM domains are found at residues 207–290 (RRVY…RPTD), 327–405 (DRIF…RANQ), and 446–532 (QVVT…YPEN).

Belongs to the splicing factor SR family.

The protein localises to the nucleus. Necessary for the splicing of pre-mRNA. This is Splicing factor U2af large subunit B (U2AF65B) from Triticum aestivum (Wheat).